Consider the following 420-residue polypeptide: Phosphoribosylamine--glycine ligase (420 aa).

Positions 108–314 (KQIMVKYGIP…FAQNIDDILH (207 aa)) constitute an ATP-grasp domain. 134-195 (IEEQGAPIVV…EEFLAGEEFS (62 aa)) is a binding site for ATP. Residues Glu284 and Asn286 each contribute to the Mg(2+) site.

This sequence belongs to the GARS family. It depends on Mg(2+) as a cofactor. Mn(2+) serves as cofactor.

It carries out the reaction 5-phospho-beta-D-ribosylamine + glycine + ATP = N(1)-(5-phospho-beta-D-ribosyl)glycinamide + ADP + phosphate + H(+). The protein operates within purine metabolism; IMP biosynthesis via de novo pathway; N(1)-(5-phospho-D-ribosyl)glycinamide from 5-phospho-alpha-D-ribose 1-diphosphate: step 2/2. This Streptococcus suis protein is Phosphoribosylamine--glycine ligase.